The sequence spans 430 residues: DD-carboxypeptidase/endopeptidase Mpg (430 aa).

3 residues coordinate Zn(2+): H295, D299, and H375.

The protein belongs to the peptidase M23B family. As to quaternary structure, monomer. The cofactor is Zn(2+). Post-translationally, likely to be synthesized as a proenzyme. The cleavage of the N-terminal domain is probably required for the activation of the enzyme.

Its subcellular location is the cell outer membrane. Its function is as follows. Has both endopeptidase and DD-carboxypeptidase activities. Degrades cell wall peptidoglycan (PG) to allow consummate expression of pili. The protein is DD-carboxypeptidase/endopeptidase Mpg of Neisseria meningitidis serogroup B (strain ATCC BAA-335 / MC58).